Consider the following 253-residue polypeptide: Dof zinc finger protein DOF3.4 (253 aa).

The Dof-type zinc finger occupies 30–84 (LPCPRCDSSNTKFCYYNNYNFSQPRHFCKACRRYWTHGGTLRDVPVGGGTRKSAK). Zn(2+) contacts are provided by cysteine 32, cysteine 35, cysteine 57, and cysteine 60. Positions 73–103 (VPVGGGTRKSAKRSRTCSNSSSSSVSGVVSN) are disordered. A compositionally biased stretch (low complexity) spans 90–103 (SNSSSSSVSGVVSN).

Interacts with OBF4 or OBF5. Constitutively expressed in the whole plant.

Its subcellular location is the nucleus. In terms of biological role, transcription factor that binds specifically to a 5'-AA[AG]G-3' consensus core sequence. Enhances the DNA binding of OBF transcription factors to OCS elements. This chain is Dof zinc finger protein DOF3.4 (DOF3.4), found in Arabidopsis thaliana (Mouse-ear cress).